Here is a 423-residue protein sequence, read N- to C-terminus: MDRASENRRLAAVGKPVPGIGEMGNRRPLRDINNLVGAPPHPSAIAKKPMLEKSGKEEQKPALVVSHRPMTRNFAASLTRKEQLDHQVSVADAAVVCTDPQKNPIPDGTVDDDVESCESNDYIAVDECNDTDEDESMMDIDSADSGNPLAATEYVEELYKFYRENEEMSCVQPDYMSSQGDINEKMRAILIDWLIEVHHKFELMDETLFLTVNIVDRFLEKQVVPRKKLQLVGVTAMLLACKYEEVAVPVVEDLVLISDRAYTKGQILEMEKLILNTLQFNMSVPTPYVFMRRFLKAAQSDKQLQLLSFFILELSLVEYQMLKYRPSLLAAAAVYTAQCALTRCQQWTKTCELHSRYTGEQLLECSRMMVDFHQKAGAGKLTGVHRKYSTFKFGCAAKTEPALFLLESGAGGYNLQKHLQQAC.

The tract at residues 1–61 (MDRASENRRL…EKSGKEEQKP (61 aa)) is disordered. The segment covering 49–60 (PMLEKSGKEEQK) has biased composition (basic and acidic residues).

It belongs to the cyclin family. Cyclin AB subfamily. Interacts with CDKB2-1. As to expression, expressed in the intercalary meristem and the elongation zone of internodes. Expressed in adventitious roots at all nodes under submergence conditions.

In terms of biological role, involved in the control of the cell cycle at the G2/M (mitosis) transition. May activate CDKB2-1 kinase. The chain is Cyclin-B2-1 (CYCB2-1) from Oryza sativa subsp. indica (Rice).